Here is a 273-residue protein sequence, read N- to C-terminus: Ribosomal RNA small subunit methyltransferase A (273 aa).

Positions 18, 20, 45, 66, 91, and 113 each coordinate S-adenosyl-L-methionine.

This sequence belongs to the class I-like SAM-binding methyltransferase superfamily. rRNA adenine N(6)-methyltransferase family. RsmA subfamily.

The protein localises to the cytoplasm. The enzyme catalyses adenosine(1518)/adenosine(1519) in 16S rRNA + 4 S-adenosyl-L-methionine = N(6)-dimethyladenosine(1518)/N(6)-dimethyladenosine(1519) in 16S rRNA + 4 S-adenosyl-L-homocysteine + 4 H(+). Its function is as follows. Specifically dimethylates two adjacent adenosines (A1518 and A1519) in the loop of a conserved hairpin near the 3'-end of 16S rRNA in the 30S particle. May play a critical role in biogenesis of 30S subunits. This is Ribosomal RNA small subunit methyltransferase A from Escherichia coli O17:K52:H18 (strain UMN026 / ExPEC).